The primary structure comprises 176 residues: Membrane-anchored junction protein (176 aa).

Over 1–151 (MSLKPFTYPF…QHNSPPPKER (151 aa)) the chain is Nuclear. A disordered region spans residues 59–150 (AVMRKRKHMD…LQHNSPPPKE (92 aa)). Residues 95 to 107 (PPVETRRNRERKT) show a composition bias toward basic and acidic residues. Positions 108-120 (QQGLQETLASDIT) are enriched in polar residues. The chain crosses the membrane as a helical span at residues 152 to 170 (AATGFFGFLSSLFPFRYFF). Over 171 to 176 (RKSSHS) the chain is Perinuclear space.

The protein belongs to the MAJIN family. Component of the MAJIN-TERB1-TERB2 complex, composed of MAJIN, TERB1 and TERB2.

The protein localises to the nucleus inner membrane. The protein resides in the chromosome. Its subcellular location is the telomere. Meiosis-specific telomere-associated protein involved in meiotic telomere attachment to the nucleus inner membrane, a crucial step for homologous pairing and synapsis. Component of the MAJIN-TERB1-TERB2 complex, which promotes telomere cap exchange by mediating attachment of telomeric DNA to the inner nuclear membrane and replacement of the protective cap of telomeric chromosomes: in early meiosis, the MAJIN-TERB1-TERB2 complex associates with telomeric DNA and the shelterin/telosome complex. During prophase, the complex matures and promotes release of the shelterin/telosome complex from telomeric DNA. In the complex, MAJIN acts as the anchoring subunit to the nucleus inner membrane. MAJIN shows DNA-binding activity, possibly for the stabilization of telomere attachment on the nucleus inner membrane. The chain is Membrane-anchored junction protein from Homo sapiens (Human).